The chain runs to 623 residues: Glutathione import ATP-binding protein GsiA (623 aa).

2 ABC transporter domains span residues 15–269 (VENL…RALL) and 314–564 (LRVR…RKLL). ATP contacts are provided by residues 49 to 56 (GESGSGKS) and 357 to 364 (GESGSGKS).

The protein belongs to the ABC transporter superfamily. Glutathione importer (TC 3.A.1.5.11) family. The complex is composed of two ATP-binding proteins (GsiA), two transmembrane proteins (GsiC and GsiD) and a solute-binding protein (GsiB).

It is found in the cell inner membrane. It carries out the reaction glutathione(out) + ATP + H2O = glutathione(in) + ADP + phosphate + H(+). Part of the ABC transporter complex GsiABCD involved in glutathione import. Responsible for energy coupling to the transport system. The chain is Glutathione import ATP-binding protein GsiA from Shigella boydii serotype 4 (strain Sb227).